The chain runs to 176 residues: Calponin-1 (176 aa).

Residues 22–125 enclose the Calponin-homology (CH) domain; it reads PQTERQLRVW…STLIALASQA (104 aa). The Calponin-like repeat unit spans residues 158–176; it reads IGLQMGTNKFASQQGMTAY. Thr-164 is modified (phosphothreonine; by ROCK2). Phosphoserine; by ROCK2 is present on Ser-169. Thr-174 carries the phosphothreonine; by ROCK2 modification.

It belongs to the calponin family. Smooth muscle, and tissues containing significant amounts of smooth muscle.

Thin filament-associated protein that is implicated in the regulation and modulation of smooth muscle contraction. It is capable of binding to actin, calmodulin and tropomyosin. The interaction of calponin with actin inhibits the actomyosin Mg-ATPase activity. This chain is Calponin-1 (CNN1), found in Meleagris gallopavo (Wild turkey).